Reading from the N-terminus, the 220-residue chain is UPF0758 protein CKO_05095 (220 aa).

The MPN domain occupies 98 to 220; sequence ALLSPEMTRE…YVSFAERGWI (123 aa). Zn(2+) contacts are provided by histidine 169, histidine 171, and aspartate 182. A JAMM motif motif is present at residues 169–182; it reads HNHPSGCAEPSKAD.

This sequence belongs to the UPF0758 family. YicR subfamily.

This is UPF0758 protein CKO_05095 from Citrobacter koseri (strain ATCC BAA-895 / CDC 4225-83 / SGSC4696).